Consider the following 246-residue polypeptide: Aliphatic sulfonates import ATP-binding protein SsuB 2 (246 aa).

Positions 4-218 (VTVRGLRRAF…RRDPRFEQAR (215 aa)) constitute an ABC transporter domain. 36-43 (GRSGGGKT) contacts ATP.

It belongs to the ABC transporter superfamily. Aliphatic sulfonates importer (TC 3.A.1.17.2) family. As to quaternary structure, the complex is composed of two ATP-binding proteins (SsuB), two transmembrane proteins (SsuC) and a solute-binding protein (SsuA).

The protein resides in the cell membrane. The enzyme catalyses ATP + H2O + aliphatic sulfonate-[sulfonate-binding protein]Side 1 = ADP + phosphate + aliphatic sulfonateSide 2 + [sulfonate-binding protein]Side 1.. Functionally, part of the ABC transporter complex SsuABC involved in aliphatic sulfonates import. Responsible for energy coupling to the transport system. This chain is Aliphatic sulfonates import ATP-binding protein SsuB 2, found in Frankia alni (strain DSM 45986 / CECT 9034 / ACN14a).